The chain runs to 317 residues: Thiamine thiazole synthase (317 aa).

Residues Cys-78, 99 to 100 (EA), Gly-107, and Val-172 each bind substrate. Cys-206 bears the 2,3-didehydroalanine (Cys) mark. Substrate contacts are provided by residues Asp-208, His-223, Met-275, and 285–287 (RMG).

The protein belongs to the THI4 family. In terms of assembly, homooctamer. Requires Fe cation as cofactor. Post-translationally, during the catalytic reaction, a sulfide is transferred from Cys-206 to a reaction intermediate, generating a dehydroalanine residue.

The protein resides in the cytoplasm. It is found in the nucleus. The catalysed reaction is [ADP-thiazole synthase]-L-cysteine + glycine + NAD(+) = [ADP-thiazole synthase]-dehydroalanine + ADP-5-ethyl-4-methylthiazole-2-carboxylate + nicotinamide + 3 H2O + 2 H(+). In terms of biological role, involved in biosynthesis of the thiamine precursor thiazole. Catalyzes the conversion of NAD and glycine to adenosine diphosphate 5-(2-hydroxyethyl)-4-methylthiazole-2-carboxylic acid (ADT), an adenylated thiazole intermediate. The reaction includes an iron-dependent sulfide transfer from a conserved cysteine residue of the protein to a thiazole intermediate. The enzyme can only undergo a single turnover, which suggests it is a suicide enzyme. May have additional roles in adaptation to various stress conditions and in DNA damage tolerance. The protein is Thiamine thiazole synthase of Yarrowia lipolytica (strain CLIB 122 / E 150) (Yeast).